The following is a 538-amino-acid chain: Putative cysteine ligase BshC (538 aa).

Positions 419 to 445 (IEAKRQIQAMEQLLAEKYSELASYLEE) form a coiled coil.

This sequence belongs to the BshC family.

In terms of biological role, involved in bacillithiol (BSH) biosynthesis. May catalyze the last step of the pathway, the addition of cysteine to glucosamine malate (GlcN-Mal) to generate BSH. The sequence is that of Putative cysteine ligase BshC from Lysinibacillus sphaericus (strain C3-41).